A 341-amino-acid chain; its full sequence is Paired box protein Pax-9 (341 aa).

Residues 4-130 (AFGEVNQLGG…SSISRILRNK (127 aa)) constitute a DNA-binding region (paired). The segment at 7 to 63 (EVNQLGGVFVNGRPLPNAIRLRIVELAQLGIRPCDISRQLRVSHGCVSKILARYNET) is PAI subdomain. The RED subdomain stretch occupies residues 82-130 (TVVKHIRTYKQRDPGIFAWEIRDRLLADGVCDKYNVPSVSSISRILRNK). Residues 168-189 (AAAAKVPTPPGVPAIPGSVAMP) form an interaction with KDM5B region.

As to quaternary structure, interacts with KDM5B.

Its subcellular location is the nucleus. Its function is as follows. Transcription factor required for normal development of thymus, parathyroid glands, ultimobranchial bodies, teeth, skeletal elements of skull and larynx as well as distal limbs. In Saguinus oedipus (Cotton-top tamarin), this protein is Paired box protein Pax-9 (PAX9).